The primary structure comprises 605 residues: MSSKKAKTKNEASSSRGGIGGESIVADCGRNKSTCGYCKSSTRFSISHGLWTERLTVNDYQALLDSGWRRSGCYLYKPEMEKTCCPSYTIRLKASDFVPSKEQQRVRRRIERFLDGELDAKPSEQTEDQDVSFSREVSVSVKKSLGAAKREKNNELEPIMKDLSEQIDNAVQKCIQSGEFPSNVQIPKASVKKVFSAKRKKLAEGSEDLLYTSNIAFPIVAAMKHTQTLEKGKNVEENRLSPEAVSEKLLSAMNKVGEFTGFSVKVSKGHINFLSATQVTSSDRNEGEESLCATTIKSSSNKLHARKRKLEMHLKRSSFEPEEYELYKRYQMKVHNDKPESISETSYKRFLVDTPLTEVPSSGYDDEEKIPLCGFGSFHQQYRVDDRLIAVGVIDILPKCLSSKYLFWDPDFASLSLGNYSALQEIDWVKQNQAHCSTLEYYYLGYYIHSCNKMRYKAAYRPSELLCPLRYQWVPFEVAKPLLDKKPYSVLSNISKVSSSSSSPQASETLLESTSEHEDMEQGDTNDDDDEMYNSDEDSDSDSSSSRNRSDITNILISLNGPRLRYKDIPRFKNPVVQKQLESMLVSYRKVVGAELSEIMVYELR.

Residues 496-513 (KVSSSSSSPQASETLLES) are compositionally biased toward low complexity. The disordered stretch occupies residues 496-549 (KVSSSSSSPQASETLLESTSEHEDMEQGDTNDDDDEMYNSDEDSDSDSSSSRNR). Acidic residues predominate over residues 518-541 (EDMEQGDTNDDDDEMYNSDEDSDS).

The protein belongs to the R-transferase family.

It carries out the reaction an N-terminal L-alpha-aminoacyl-[protein] + L-arginyl-tRNA(Arg) = an N-terminal L-arginyl-L-aminoacyl-[protein] + tRNA(Arg) + H(+). Its function is as follows. Involved in the post-translational conjugation of arginine to the N-terminal aspartate or glutamate of a protein. This arginylation is required for degradation of the protein via the ubiquitin pathway. Component of the N-end rule pathway with ATE1 and PRT6. The N-end rule pathway regulates seed after-ripening, seedling sugar sensitivity, seedling lipid breakdown, and abscisic acid (ABA) sensitivity of germination. The end-rule pathway regulates various aspects of leaf and shoot development. Involved in the oxygen-dependent N-arginylation of RAP2-12, an activator of hypoxic gene expression. This N-terminal modification leads to ubiquitination by PRT6 and subsequent degradation of RAP2-12 under aerobic conditions. Involved in disease resistance. The end-rule pathway plays a role in regulating the timing and amplitude of the immune response following infection with the bacterial pathogen Pseudomonas syringae pv tomato. Regulates the biosynthesis of plant-defense metabolites such as glucosinolates, and the biosynthesis and response to the phytohormone jasmonate (JA), which plays a key role in plant immunity. This Arabidopsis thaliana (Mouse-ear cress) protein is Arginyl-tRNA--protein transferase 2.